A 55-amino-acid chain; its full sequence is MENSRTSTFTAYVTVAFLLISTFVTMVVTESQIVWVPCNPRSKKTDDAGICRNTY.

Residues Met-1–Ser-31 form the signal peptide. Gln-32 bears the Pyrrolidone carboxylic acid mark.

Contains 1 disulfide bond. Expressed by the venom gland.

The protein localises to the secreted. The polypeptide is U17-myrmicitoxin-Mri1b (Manica rubida (European giant red ant)).